Here is a 275-residue protein sequence, read N- to C-terminus: Exosome complex component Rrp42 (275 aa).

This sequence belongs to the RNase PH family. Rrp42 subfamily. In terms of assembly, component of the archaeal exosome complex. Forms a hexameric ring-like arrangement composed of 3 Rrp41-Rrp42 heterodimers. The hexameric ring associates with a trimer of Rrp4 and/or Csl4 subunits.

It is found in the cytoplasm. In terms of biological role, non-catalytic component of the exosome, which is a complex involved in RNA degradation. Contributes to the structuring of the Rrp41 active site. This chain is Exosome complex component Rrp42, found in Saccharolobus islandicus (strain Y.N.15.51 / Yellowstone #2) (Sulfolobus islandicus).